Consider the following 307-residue polypeptide: Streptomycin 6-kinase (307 aa).

Leucine 133–alanine 145 provides a ligand contact to streptomycin. The active-site Proton acceptor is aspartate 201.

This sequence belongs to the aminoglycoside phosphotransferase family.

The enzyme catalyses streptomycin + ATP = streptomycin 6-phosphate + ADP + H(+). The aminoglycoside phosphotransferases achieve inactivation of their antibiotic substrates by phosphorylation. This Streptomyces glaucescens protein is Streptomycin 6-kinase (sph).